Consider the following 171-residue polypeptide: Glucagon family neuropeptides (171 aa).

Residues 1–22 (MYRKALLVWLLVYGIMRCTVHS) form the signal peptide. The propeptide occupies 23–76 (SPTALKYPALRLEDEVYDEDGNTLPDFAFDNNPIGIGNPASVFDDMYSFYYPAE). Residues 145-153 (VKKYLAAVL) form an important for receptor binding region. Lysine 164 carries the post-translational modification Lysine amide. Positions 168–171 (VAYL) are excised as a propeptide.

This sequence belongs to the glucagon family.

It localises to the secreted. Primary role of GRF is to release GH from the pituitary. Its function is as follows. PACAP is a neuropeptide involved in diverse array of physiological processes through activating the PACAP subfamily of class B1 G protein-coupled receptors: VIP receptor 1 (VIPR1), VIP receptor 2 (VIPR2), and PACAP type I receptor (ADCYAP1R1). Exerts neuroprotective and general cytoprotective effects due to anti-apoptotic, anti-inflammatory, and antioxidant actions. In Pelophylax ridibundus (Marsh frog), this protein is Glucagon family neuropeptides (adcyap1).